The chain runs to 188 residues: UPF0398 protein ABC2016 (188 aa).

It belongs to the UPF0398 family.

This Shouchella clausii (strain KSM-K16) (Alkalihalobacillus clausii) protein is UPF0398 protein ABC2016.